Consider the following 119-residue polypeptide: uncharacterized protein (119 aa).

An N-terminal signal peptide occupies residues 1 to 18 (MPAVFMLASSSALQCGRG). The segment at 23-100 (PRTEVGAGHS…MFPGPLRGPA (78 aa)) is disordered. The segment covering 43-71 (GNQTSVIPATSRQAALGTSWTQRRTQPLQ) has biased composition (polar residues). Asparagine 44 carries N-linked (GlcNAc...) asparagine glycosylation.

The protein resides in the secreted. This is an uncharacterized protein from Homo sapiens (Human).